The sequence spans 105 residues: Small ribosomal subunit protein bS18 (105 aa).

The disordered stretch occupies residues 1–34; the sequence is MMINKEQDLNQLETNQEQSVEQNQTDEKRKPKPN. Residues 9–23 show a composition bias toward polar residues; that stretch reads LNQLETNQEQSVEQN.

The protein belongs to the bacterial ribosomal protein bS18 family. Part of the 30S ribosomal subunit. Forms a tight heterodimer with protein bS6.

Functionally, binds as a heterodimer with protein bS6 to the central domain of the 16S rRNA, where it helps stabilize the platform of the 30S subunit. The polypeptide is Small ribosomal subunit protein bS18 (Mycoplasma genitalium (strain ATCC 33530 / DSM 19775 / NCTC 10195 / G37) (Mycoplasmoides genitalium)).